The sequence spans 45 residues: Metallothionein-like protein 1A (45 aa).

Belongs to the metallothionein superfamily. Type 15 family. Expressed in phloem and mesophyll cells of leaves, vascular tissues of cotyledons, sepals and petals. Expressed in anthers. Expressed in root endodermis and at lower levels in cortex of mature region of roots.

Metallothioneins have a high content of cysteine residues that bind various heavy metals. Functions as a metal chelator of copper (Cu) and zinc (Zn). Plays a role in Cu homeostasis in the roots under elevated Cu concentration. Functions cooperatively with the phytochelatin synthase PCS1 to protect plants from Cu and cadmium (Cd) toxicity. Plays a role in Cu homeostasis, specifically in the remobilization of Cu from senescing leaves. The mobilization of Cu from internal sources is important for seed development. Confers tolerance to Cd and plays a role in Cd and Zn homeostasis. The protein is Metallothionein-like protein 1A (MT1A) of Arabidopsis thaliana (Mouse-ear cress).